A 901-amino-acid polypeptide reads, in one-letter code: HTH-type transcriptional regulator MalT (901 aa).

ATP is bound at residue 39-46 (SPAGYGKT). The HTH luxR-type domain maps to 829–894 (ELIRTSPLTQ…DAVQHAQQLL (66 aa)). The segment at residues 853–872 (NEQIAGELAVAATTIKTHIR) is a DNA-binding region (H-T-H motif).

Belongs to the MalT family. In terms of assembly, monomer in solution. Oligomerizes to an active state in the presence of the positive effectors ATP and maltotriose.

Activated by ATP and maltotriose, which are both required for DNA binding. Its function is as follows. Positively regulates the transcription of the maltose regulon whose gene products are responsible for uptake and catabolism of malto-oligosaccharides. Specifically binds to the promoter region of its target genes, recognizing a short DNA motif called the MalT box. This chain is HTH-type transcriptional regulator MalT, found in Salmonella typhimurium (strain LT2 / SGSC1412 / ATCC 700720).